The chain runs to 520 residues: Polycomb protein PHO (520 aa).

4 C2H2-type zinc fingers span residues 357–381 (IACP…LHTH), 386–408 (HVCA…QLVH), 414–438 (FQCT…VRIH), and 444–468 (FVCP…ILTH). Positions 475–497 (TSISGKSGCSNAESNSQSEDTSA) are disordered.

As to quaternary structure, component of the Esc/E(z) complex, composed of Esc, E(z), Su(z)12, HDAC1/Rpd3 and Caf1-55. This complex is distinct from the PRC1 complex, which contains many other PcG proteins like Pc, Ph, Psc, Su(z)2. The two complexes however cooperate and interact together during the first 3 hours of development to establish PcG silencing. Component of the chromatin remodeling Ino80 complex. Interacts with Sfmbt to form a pho-repressive complex (PhoRC).

It is found in the nucleus. Functionally, polycomb group (PcG) protein that binds to the 5'-CNGCCATNNNNG-3' sequence found in the regulatory regions of many genes. PcG proteins act by forming multiprotein complexes, which are required to maintain the transcriptionally repressive state of homeotic genes throughout development. PcG proteins are not required to initiate repression, but to maintain it during later stages of development. They probably act via the methylation of histones, rendering chromatin heritably changed in its expressibility. Probably targets the Esc/E(z) complex to DNA. Necessary but not sufficient to recruit a functional PcG repressive complex that represses target genes, suggesting that the recruitment of the distinct PRC1 complex is also required to allow a subsequent repression. Its function is as follows. Proposed core component of the chromatin remodeling Ino80 complex which is involved in transcriptional regulation, DNA replication and probably DNA repair. This is Polycomb protein PHO (pho) from Drosophila melanogaster (Fruit fly).